The following is a 440-amino-acid chain: Xylose isomerase (440 aa).

Residues histidine 101 and aspartate 104 contribute to the active site. Mg(2+) contacts are provided by glutamate 232, glutamate 268, histidine 271, aspartate 296, aspartate 307, aspartate 309, and aspartate 339.

It belongs to the xylose isomerase family. In terms of assembly, homotetramer. Requires Mg(2+) as cofactor.

The protein localises to the cytoplasm. The catalysed reaction is alpha-D-xylose = alpha-D-xylulofuranose. The polypeptide is Xylose isomerase (Salmonella paratyphi B (strain ATCC BAA-1250 / SPB7)).